Here is a 411-residue protein sequence, read N- to C-terminus: Immunity-related GTPase family M protein (411 aa).

Residues 1–21 are disordered; the sequence is MKPSHKSCEAAPLLPKMPETS. An IRG-type G domain is found at 77–253; the sequence is IPVSIFVTGD…PELRNTLQTD (177 aa). GTP-binding positions include 86-93, 111-115, and 193-195; these read DSGNGMSS, TGVVR, and KLD. S204 carries the post-translational modification Phosphoserine. Residue 234–236 coordinates GTP; the sequence is SNL. K272 participates in a covalent cross-link: Glycyl lysine isopeptide (Lys-Gly) (interchain with G-Cter in ubiquitin). Residues 352-376 are alpha-K amphipathic helix; it reads KLRLMTCTTVNALFCLFKFLPCLCH.

Belongs to the TRAFAC class dynamin-like GTPase superfamily. IRG family. As to quaternary structure, interacts with ULK1; promoting the coassembly of ULK1 and BECN1. Interacts with BECN1; enhancing BECN1-interacting partners and influencing the composition of the BECN1 complex. Interacts with ATG16L1. Interacts with NOD2; promoting Irgm 'Lys-63'-linked polyubiquitination, which is required for interactions with the core autophagy factors. Interacts with STX17; promoting STX17 recruitment to autophagosomes. Interacts with ATG8 proteins (GABARAP, GABARAPL1, GABARAPL2, MAP1LC3A, MAP1LC3B and MAP1LC3C); promoting STX17 recruitment to autophagosomes. Interacts with TFEB; promoting association between TFEB and PPP3CB and TFEB dephosphorylation. Interacts with PPP3CB; promoting association between TFEB and PPP3CB and TFEB dephosphorylation. Interacts with NLRP3; preventing NLRP3 inflammasome assembly and promoting SQSTM1/p62-dependent autophagic degradation of NLRP3. Interacts with CGAS; promoting SQSTM1/p62-dependent autophagic degradation of CGAS. Interacts with RIGI/RIG-I; promoting SQSTM1/p62-dependent autophagic degradation of RIGI/RIG-I. Interacts with NOD1; promoting SQSTM1/p62-dependent autophagic degradation of RIGI/RIG-I. Interacts with NOD2; promoting SQSTM1/p62-dependent autophagic degradation of RIGI/RIG-I. Interacts with RIPK2; promoting SQSTM1/p62-dependent autophagic degradation of RIGI/RIG-I. Interacts with PIK3CA. Post-translationally, palmitoylated on C-terminal Cys residues. Palmitoylation, together with the alpha-K amphipathic helix, which binds phosphatidylinositol, mediate binding to membranes. In terms of processing, ubiquitinated via 'Lys-63'-linked polyubiquitination in a NOD2-dependent process. 'Lys-63'-linked polyubiquitination is required for interactions with the core autophagy factors. Ubiquitination at Lys-272 by the DCX(WDR77) complex, also named CLR4(WDR77) complex, in intestinal cells, leading to its degradation by the proteasome.

It is found in the golgi apparatus membrane. It localises to the cell membrane. The protein localises to the cytoplasmic vesicle. Its subcellular location is the phagosome membrane. The protein resides in the autophagosome membrane. It is found in the lysosome membrane. It localises to the late endosome membrane. The protein localises to the mitochondrion membrane. Its subcellular location is the cell projection. The protein resides in the phagocytic cup. The enzyme catalyses GTP + H2O = GDP + phosphate + H(+). Functionally, immunity-related GTPase that plays important roles in innate immunity and inflammatory response. Acts as a dynamin-like protein that binds to intracellular membranes and promotes remodeling and trafficking of those membranes. Required for clearance of acute protozoan and bacterial infections by interacting with autophagy and lysosome regulatory proteins, thereby promoting the fusion of phagosomes with lysosomes for efficient degradation of cargo including microbes. Regulates selective autophagy, including xenophagy and mitophagy, both directly and indirectly. Directly regulates autophagy by acting as a molecular adapter that promotes the coassembly of the core autophagy machinery to mediate antimicrobial defense: Irgm (1) activates AMPK, which in turn phosphorylates ULK1 and BECN1 to induce autophagy, (2) promotes the coassembly of ULK1 and BECN1, enhancing BECN1-interacting partners and (3) influences the composition of the BECN1 complex, by competing with the negative regulators BCL2 and RUBCN, to trigger autophagy. Also activates autophagy by promoting recruitment of STX17 to autophagosomes. In collaboration with ATG8 proteins, regulate lysosomal biogenesis, a fundamental process for any autophagic pathway, by promoting TFEB dephosphorylation. Also modulates autophagy by assisting with autophagosome formation and preventing lysosomal deacidification. Regulates autophagy by affecting mitochondrial fusion and fission. Also involved in M1 macrophage activation for the production of proinflammatory cytokines. While activating autophagy, acts as a key negative regulator of the inflammatory and interferon responses both by (1) promoting mitophagy and (2) mediating autophagy-dependent degradation of effectors of the inflammatory response. Promotes degradation of damaged and IFNG/IFN-gamma-stressed mitochondria via mitophagy, preventing cytosolic release of ligands that activate inflammation. Negatively regulates interferon-signaling in hematopoietic stem cells, preserving hematopoietic stem cell number and function. Promotes expansion of activated CD4(+) T-cells by inhibiting IFNG/IFN-gamma signaling, thereby preventing Ifng-mediated cell death of CD4(+) T-cells. Acts as a suppressor of inflammation by promoting recruitment of inflammation effectors, such as CGAS, RIGI/RIG-I and NLRP3, to autophagosome membranes, leading to their SQSTM1/p62-dependent autophagic degradation. Also directly inhibits assembly of the NLRP3 inflammasome by preventing the association between NLRP3 and PYCARD. Acts as a negative regulator of antiviral innate immune response by suppressing the RIPK2-dependent pro-inflammatory response: mediates recruitment of RIPosomes, composed of RIPK2 and NOD1 or NOD2, to autophagosome membranes, promoting their SQSTM1/p62-dependent autophagic degradation. In Rattus norvegicus (Rat), this protein is Immunity-related GTPase family M protein.